The following is a 447-amino-acid chain: Aladin (447 aa).

The disordered stretch occupies residues 49 to 69 (STPSSLQENEGQENGDKASGE). WD repeat units lie at residues 97-138 (LSEI…EPCI), 142-181 (DSQRNVKALEWRPNGGKSLSIACRGGICIWAASYPGNMAL), 210-250 (QNDE…GTPI), and 252-291 (RGLGGISMLKWSPTGDYFFAARFDGTFCLWETNTWTSEPW).

As to quaternary structure, part of the nuclear pore complex (NPC). The NPC has an eight-fold symmetrical structure comprising a central transport channel and two rings, the cytoplasmic and nuclear rings, to which eight filaments are attached. The cytoplasmic filaments have loose ends, while the nuclear filaments are joined in a distal ring, forming a nuclear basket. NPCs are highly dynamic in configuration and composition, and can be devided in 3 subcomplexes, the NUP62 subcomplex, the NUP107-160 subcomplex and the NUP93 subcomplex, containing approximately 30 different nucleoporin proteins.

It localises to the nucleus envelope. Its subcellular location is the nucleus. The protein resides in the nuclear pore complex. The sequence is that of Aladin from Arabidopsis thaliana (Mouse-ear cress).